A 504-amino-acid polypeptide reads, in one-letter code: Pyruvate kinase (504 aa).

Substrate is bound at residue Arg-53. The K(+) site is built by Asn-55, Ser-57, Asp-88, and Thr-89. 55–58 is a binding site for ATP; sequence NFSH. Residues Arg-95 and Lys-181 each contribute to the ATP site. Glu-246 is a binding site for Mg(2+). Substrate-binding residues include Gly-269, Asp-270, and Thr-302. Asp-270 lines the Mg(2+) pocket.

It belongs to the pyruvate kinase family. Homotetramer. The cofactor is Mg(2+). K(+) serves as cofactor.

It catalyses the reaction pyruvate + ATP = phosphoenolpyruvate + ADP + H(+). It functions in the pathway carbohydrate degradation; glycolysis; pyruvate from D-glyceraldehyde 3-phosphate: step 5/5. This is Pyruvate kinase (PYK1) from Debaryomyces hansenii (strain ATCC 36239 / CBS 767 / BCRC 21394 / JCM 1990 / NBRC 0083 / IGC 2968) (Yeast).